Here is a 792-residue protein sequence, read N- to C-terminus: Probable exo-1,4-beta-xylosidase xlnD (792 aa).

The N-terminal stretch at 1–20 is a signal peptide; it reads MSAIKSIATVLAAILPSVLA. N-linked (GlcNAc...) asparagine glycans are attached at residues asparagine 23, asparagine 87, asparagine 142, and asparagine 246. Aspartate 310 is an active-site residue. N-linked (GlcNAc...) asparagine glycans are attached at residues asparagine 326, asparagine 385, asparagine 391, asparagine 404, asparagine 438, asparagine 475, asparagine 479, asparagine 516, asparagine 677, and asparagine 699.

Belongs to the glycosyl hydrolase 3 family.

It is found in the secreted. The enzyme catalyses Hydrolysis of (1-&gt;4)-beta-D-xylans, to remove successive D-xylose residues from the non-reducing termini.. It functions in the pathway glycan degradation; xylan degradation. Xylan 1,4-beta-xylosidase involved in the hydrolysis of xylan, a major structural heterogeneous polysaccharide found in plant biomass representing the second most abundant polysaccharide in the biosphere, after cellulose. The polypeptide is Probable exo-1,4-beta-xylosidase xlnD (xlnD) (Aspergillus clavatus (strain ATCC 1007 / CBS 513.65 / DSM 816 / NCTC 3887 / NRRL 1 / QM 1276 / 107)).